A 156-amino-acid polypeptide reads, in one-letter code: Ribosomal RNA large subunit methyltransferase H (156 aa).

S-adenosyl-L-methionine-binding positions include glycine 104 and 123 to 128 (LSAMTL).

Belongs to the RNA methyltransferase RlmH family. Homodimer.

It localises to the cytoplasm. The catalysed reaction is pseudouridine(1915) in 23S rRNA + S-adenosyl-L-methionine = N(3)-methylpseudouridine(1915) in 23S rRNA + S-adenosyl-L-homocysteine + H(+). Its function is as follows. Specifically methylates the pseudouridine at position 1915 (m3Psi1915) in 23S rRNA. This is Ribosomal RNA large subunit methyltransferase H from Chromobacterium violaceum (strain ATCC 12472 / DSM 30191 / JCM 1249 / CCUG 213 / NBRC 12614 / NCIMB 9131 / NCTC 9757 / MK).